Reading from the N-terminus, the 275-residue chain is Large ribosomal subunit protein uL2 (275 aa).

Residues 223-275 (VAMNPVDHPHGGGEGRTGEGRVPVSPWGTPAKGYRTRNNKRTDNMIVRRRHSK) are disordered. Over residues 229–241 (DHPHGGGEGRTGE) the composition is skewed to basic and acidic residues.

The protein belongs to the universal ribosomal protein uL2 family. Part of the 50S ribosomal subunit. Forms a bridge to the 30S subunit in the 70S ribosome.

One of the primary rRNA binding proteins. Required for association of the 30S and 50S subunits to form the 70S ribosome, for tRNA binding and peptide bond formation. It has been suggested to have peptidyltransferase activity; this is somewhat controversial. Makes several contacts with the 16S rRNA in the 70S ribosome. The polypeptide is Large ribosomal subunit protein uL2 (Laribacter hongkongensis (strain HLHK9)).